Here is a 157-residue protein sequence, read N- to C-terminus: Small ribosomal subunit protein uS7 (157 aa).

Belongs to the universal ribosomal protein uS7 family. Part of the 30S ribosomal subunit. Contacts proteins S9 and S11.

Its function is as follows. One of the primary rRNA binding proteins, it binds directly to 16S rRNA where it nucleates assembly of the head domain of the 30S subunit. Is located at the subunit interface close to the decoding center, probably blocks exit of the E-site tRNA. This is Small ribosomal subunit protein uS7 from Leptospira borgpetersenii serovar Hardjo-bovis (strain JB197).